The primary structure comprises 951 residues: Serrate RNA effector molecule homolog (951 aa).

Disordered stretches follow at residues 1–108 (MADS…PRYG), 283–515 (FDRK…KVNP), 644–664 (PLSK…GSGS), and 864–893 (DPKR…GYRP). Basic and acidic residues-rich tracts occupy residues 8–33 (YDRK…ERRP) and 40–49 (GRDEWSERNP). The span at 51-60 (RGGGAGGGGA) shows a compositional bias: gly residues. Position 79 is a phosphotyrosine (Tyr-79). Ser-81 carries the post-translational modification Phosphoserine. The span at 92-103 (MRSDWGDGDGRP) shows a compositional bias: basic and acidic residues. At Thr-299 the chain carries Phosphothreonine. Phosphoserine occurs at positions 302, 328, and 354. The span at 328–340 (SDDENWDDAEVED) shows a compositional bias: acidic residues. Over residues 341-362 (APPKKPEEEEPKESEPIPEIKQ) the composition is skewed to basic and acidic residues. Residues 363–378 (KQKKEKKKKIKKRKRN) are compositionally biased toward basic residues. A compositionally biased stretch (low complexity) spans 387-396 (SSESESSSSS). The span at 405-434 (EKLKAKYDVEDGLRAEQKAEAEKDQAEAAK) shows a compositional bias: basic and acidic residues. The residue at position 441 (Ser-441) is a Phosphoserine. Over residues 442–487 (PKEEISPEKSAADPEVEGEAKEDGKQAEKSPKSDDEKKQENGDAAK) the composition is skewed to basic and acidic residues. Polar residues predominate over residues 649–664 (SPASDSEATAANGSGS).

This sequence belongs to the ARS2 family. As to quaternary structure, interacts with cbp20, Dcr-2 and pasha.

It is found in the nucleus. Functionally, acts as a mediator between the cap-binding complex (CBC) and RNA-mediated gene silencing (RNAi). Involved in innate immunity via the short interfering RNAs (siRNAs) processing machinery by restricting the viral RNA production. Also involved microRNA (miRNA)-mediated silencing by contributing to the stability and delivery of primary miRNA transcripts to the primary miRNA processing complex containing drosha and pasha. The polypeptide is Serrate RNA effector molecule homolog (Ars2) (Drosophila persimilis (Fruit fly)).